A 659-amino-acid polypeptide reads, in one-letter code: Serine/threonine-protein kinase StkP (659 aa).

The Cytoplasmic portion of the chain corresponds to 1-342 (MIQIGKIFAG…PQAPKKHRFK (342 aa)). Residues 12–273 (YRIVKQIGRG…EMYVDLSSSL (262 aa)) enclose the Protein kinase domain. ATP is bound by residues 18–26 (IGRGGMADV) and lysine 42. The Proton acceptor role is filled by aspartate 136. The helical transmembrane segment at 343–363 (MRYLILLASLVLVAASLIWIL) threads the bilayer. The Extracellular portion of the chain corresponds to 364–659 (SRTPATIAIP…YKPKTTSATP (296 aa)). 4 PASTA domains span residues 366–433 (TPAT…VVSS), 434–505 (GKQS…TVAK), 506–577 (KATT…TVAK), and 578–651 (KVTS…SIYK). The segment at 541–561 (EEESSESEPGTIMKQSPGAGT) is disordered.

It belongs to the protein kinase superfamily. Ser/Thr protein kinase family. Homodimer. StkP forms dimers through its transmembrane and extracellular domains. Dimer formation likely promotes autophosphorylation activity and might be necessary for targeting StkP substrate. Autophosphorylation occurs predominantly at the threonine residue and weakly at the serine residue. Dephosphorylated by PhpP.

Its subcellular location is the cell membrane. The enzyme catalyses L-seryl-[protein] + ATP = O-phospho-L-seryl-[protein] + ADP + H(+). The catalysed reaction is L-threonyl-[protein] + ATP = O-phospho-L-threonyl-[protein] + ADP + H(+). Functionally, protein kinase involved in signal transduction pathways that regulate various cellular processes. Likely senses intracellular peptidoglycan subunits present in the cell division septa of actively growing cells; thus, intracellular unlinked peptidoglycan may serve as the signal molecules that trigger StkP phosphorylation activity on a set of substrates. Plays a crucial role in the regulation of cell shape and cell division of S.pneumoniae through control of at least DivIVA activity. Is involved in competence triggering, and is required for the expression of the central competence operon comCDE. StkP also plays an important role for bacterial survival in vivo. Identified target substrates that are specifically phosphorylated by StkP in vivo, mainly on threonine residues, are DivIVA, GlmM, PpaC, MapZ, KhpB (also called EloR/Jag, shown in strains R6 and Rx1) and StkP itself. Autophosphorylated StkP is a substrate for the cotranscribed protein phosphatase PhpP (shown in the avirulent strain Rx / Cp1015); PhpP and StkP appear to constitute a functional signaling couple in vivo. The polypeptide is Serine/threonine-protein kinase StkP (stkP) (Streptococcus pneumoniae serotype 2 (strain D39 / NCTC 7466)).